The chain runs to 127 residues: PanD regulatory factor (127 aa).

An N-acetyltransferase domain is found at 1-127 (MKLTIIRLEK…TAQQGGWEKC (127 aa)). 2 interaction with PanD regions span residues 43-48 (RFNERL) and 66-76 (LRVREVTRRRG). CoA-binding positions include 66 to 68 (LRV) and 72 to 79 (TRRRGVGQ).

Belongs to the PanZ/PanM family. Interacts with PanD in the presence of CoA. Forms a heterooctameric complex composed of four PanD subunits and four PanZ subunits. Monomer in solution.

With respect to regulation, activation of PanD processing occurs even at low CoA concentrations. In contrast, full inhibition of PanD catalytic activity only occurs at sufficiently high CoA concentrations. Controls both the activation and catalytic activity of PanD in a coenzyme A (CoA)-dependent fashion. Binding of CoA or a derivative to PanZ leads to interaction with PanD, which promotes the processing and activation of pro-PanD, and subsequent substrate-mediated inhibition of the active form of PanD. Inhibition of PanD activity is probably the primary metabolic role of PanZ, allowing negative feedback regulation of pantothenate biosynthesis by CoA. This chain is PanD regulatory factor, found in Escherichia coli (strain K12).